Consider the following 227-residue polypeptide: Interleukin-6 (227 aa).

The signal sequence occupies residues 1–22 (MASISYLLAPLVLAAVLQPTAG). The segment at 24 to 45 (PLDAPTESPAGETSGEEAETGS) is disordered. Cysteines 93 and 103 form a disulfide.

It belongs to the IL-6 superfamily. Component of a hexamer of two molecules each of IL6, IL6R and IL6ST; first binds to IL6R to associate with the signaling subunit IL6ST. In terms of tissue distribution, after induction, highly expressed in spleen. Can also be expressed in kidney after incubation with PHA.

The protein resides in the secreted. In terms of biological role, cytokine with a wide variety of biological functions in immunity, tissue regeneration, and metabolism. Binds to IL6R, then the complex associates to the signaling subunit IL6ST/gp130 to trigger the intracellular IL6-signaling pathway. The interaction with the membrane-bound IL6R and IL6ST stimulates 'classic signaling', whereas the binding of IL6 and soluble IL6R to IL6ST stimulates 'trans-signaling'. Alternatively, 'cluster signaling' occurs when membrane-bound IL6:IL6R complexes on transmitter cells activate IL6ST receptors on neighboring receiver cells. This Takifugu rubripes (Japanese pufferfish) protein is Interleukin-6 (il6).